A 440-amino-acid polypeptide reads, in one-letter code: MAQFFKPQKKSTQPQRIEFTVDSLDHHCVGIGRHQGKAIFIEGALPGELVKARILEDKKQYAHAALQQVVTPAANRIAPFCSHYRECGGCSAQHLAEADQRAAKEAGLVSLFERLGNIQPPALEPVLGGESRAYRRVCRLAIKFDKNGRCTRVGFRRRQSNDLVEIGGCPVLAEPLSVLITPLRECLNRLKSQRELGHVELIQAEQGILMLLRHTGRPTEADRAQLIEFAKTQGIDLYLQAADEQIEPLHQQFAPSYSLDGLSLAFAPGDFIQVNAPVNQRMVEQALSWLEAGKDDKVLDLFCGIGNFTLPLARQAREVVGVEGELAMVARAEENARRNGINNARFYKADLGGDIAGMSWAREGFDLVLLDPARPGAFEVMEHVVKLSPRRVVYVSCNPVTLARDSQVLVKGGYRLVRLGMLDMFPHTGHLESMALFERK.

The region spanning Lys-10–Gln-68 is the TRAM domain. Residues Cys-81, Cys-87, Cys-90, and Cys-169 each coordinate [4Fe-4S] cluster. S-adenosyl-L-methionine contacts are provided by Gln-273, Phe-302, Asn-307, Glu-323, Asp-350, and Asp-371. Catalysis depends on Cys-397, which acts as the Nucleophile.

The protein belongs to the class I-like SAM-binding methyltransferase superfamily. RNA M5U methyltransferase family. RlmD subfamily.

It catalyses the reaction uridine(1939) in 23S rRNA + S-adenosyl-L-methionine = 5-methyluridine(1939) in 23S rRNA + S-adenosyl-L-homocysteine + H(+). Its function is as follows. Catalyzes the formation of 5-methyl-uridine at position 1939 (m5U1939) in 23S rRNA. The sequence is that of 23S rRNA (uracil(1939)-C(5))-methyltransferase RlmD from Aeromonas hydrophila subsp. hydrophila (strain ATCC 7966 / DSM 30187 / BCRC 13018 / CCUG 14551 / JCM 1027 / KCTC 2358 / NCIMB 9240 / NCTC 8049).